A 698-amino-acid polypeptide reads, in one-letter code: Serotransferrin (698 aa).

Residues 1-19 form the signal peptide; the sequence is MRLAVGALLVCAVLGLCLA. Transferrin-like domains lie at 25–347 and 361–683; these read VRWC…NLRE and VKWC…NLRK. 2 disulfide bridges follow: Cys-28–Cys-67 and Cys-38–Cys-58. Arg-42 bears the Dimethylated arginine mark. Ser-51 carries an O-linked (GalNAc...) serine glycan. Residues Asp-82 and Tyr-114 each contribute to the Fe(3+) site. Cystine bridges form between Cys-137–Cys-213, Cys-156–Cys-350, Cys-177–Cys-193, Cys-180–Cys-198, Cys-190–Cys-196, Cys-246–Cys-260, Cys-358–Cys-615, Cys-364–Cys-396, Cys-374–Cys-387, Cys-421–Cys-693, Cys-437–Cys-656, Cys-469–Cys-542, Cys-493–Cys-684, Cys-503–Cys-517, Cys-514–Cys-525, Cys-582–Cys-596, and Cys-634–Cys-639. Residues Thr-139, Arg-143, Ala-145, and Gly-146 each coordinate hydrogencarbonate. Tyr-207 lines the Fe(3+) pocket. His-268 provides a ligand contact to Fe(3+). Ser-389 is modified (phosphoserine; by FAM20C). Asp-411 provides a ligand contact to Fe(3+). Asn-432 carries N-linked (GlcNAc...) (complex) asparagine glycosylation. Residue Tyr-445 participates in Fe(3+) binding. 4 residues coordinate hydrogencarbonate: Thr-471, Arg-475, Ala-477, and Gly-478. An N-linked (GlcNAc...) asparagine; atypical; partial glycan is attached at Asn-491. Residue Tyr-536 participates in Fe(3+) binding. His-604 lines the Fe(3+) pocket. An N-linked (GlcNAc...) (complex) asparagine glycan is attached at Asn-630. Ser-685 bears the Phosphoserine; by FAM20C mark.

It belongs to the transferrin family. Monomer. Part of a complex composed of SLC40A1/ferroportin, TF/transferrin and HEPH/hephaestin that transfers iron from cells to transferrin. As to quaternary structure, (Microbial infection) Binds to Neisseria transferrin-binding protein A (tbpA or tbp1). Forms a large complex with TbpA and TbpB. In terms of assembly, (Microbial infection) Binds to Neisseria transferrin-binding protein B (tbpb or tbp2). In terms of tissue distribution, expressed by the liver and secreted in plasma.

The protein localises to the secreted. In terms of biological role, transferrins are iron binding transport proteins which can bind two Fe(3+) ions in association with the binding of an anion, usually bicarbonate. It is responsible for the transport of iron from sites of absorption and heme degradation to those of storage and utilization. Serum transferrin may also have a further role in stimulating cell proliferation. (Microbial infection) Serves as an iron source for Neisseria species, which capture the protein and extract its iron for their own use. Functionally, (Microbial infection) Serves as an iron source for parasite T.brucei (strain 427), which capture TF via its own transferrin receptor ESAG6:ESAG7 and extract its iron for its own use. The sequence is that of Serotransferrin from Homo sapiens (Human).